We begin with the raw amino-acid sequence, 442 residues long: C4-dicarboxylate transport protein 2 (442 aa).

The next 9 membrane-spanning stretches (helical) occupy residues 20–39, 52–74, 89–111, 141–158, 162–179, 200–221, 231–253, 342–364, and 368–387; these read QLYV…GHYY, AFIK…TGIA, AMLY…ANVV, VTGF…GAFA, ILQV…LALV, LVSV…FTIG, LAML…LGAV, ILLL…AGFI, and ATLS…ILGV.

Belongs to the dicarboxylate/amino acid:cation symporter (DAACS) (TC 2.A.23) family.

It localises to the cell inner membrane. Its function is as follows. Responsible for the transport of dicarboxylates such as succinate, fumarate, and malate from the periplasm across the membrane. This transport system plays an important role in the energy supply of rhizobium-legume symbionts. This Mesorhizobium japonicum (strain LMG 29417 / CECT 9101 / MAFF 303099) (Mesorhizobium loti (strain MAFF 303099)) protein is C4-dicarboxylate transport protein 2 (dctA2).